Consider the following 937-residue polypeptide: Valine--tRNA ligase (937 aa).

A 'HIGH' region motif is present at residues 44–54 (PNVTGTLHMGH). The 'KMSKS' region motif lies at 548-552 (KMSKS). Lysine 551 contributes to the ATP binding site. The stretch at 874 to 937 (AAETARLTKE…KLKAQLLKLA (64 aa)) forms a coiled coil.

The protein belongs to the class-I aminoacyl-tRNA synthetase family. ValS type 1 subfamily. Monomer.

It localises to the cytoplasm. It carries out the reaction tRNA(Val) + L-valine + ATP = L-valyl-tRNA(Val) + AMP + diphosphate. Functionally, catalyzes the attachment of valine to tRNA(Val). As ValRS can inadvertently accommodate and process structurally similar amino acids such as threonine, to avoid such errors, it has a 'posttransfer' editing activity that hydrolyzes mischarged Thr-tRNA(Val) in a tRNA-dependent manner. In Laribacter hongkongensis (strain HLHK9), this protein is Valine--tRNA ligase.